Reading from the N-terminus, the 364-residue chain is Tyrosine-protein phosphatase YVH1 (364 aa).

The 163-residue stretch at E11–D173 folds into the Tyrosine-protein phosphatase domain. C117 serves as the catalytic Phosphocysteine intermediate. Residue S196 is modified to Phosphoserine.

This sequence belongs to the protein-tyrosine phosphatase family. Non-receptor class dual specificity subfamily.

It carries out the reaction O-phospho-L-tyrosyl-[protein] + H2O = L-tyrosyl-[protein] + phosphate. Functionally, may be directly involved in signal transduction and/or cell cycle regulation. It is necessary for maintaining growth rate or spore germination. Could show both activity toward tyrosine-protein phosphate as well as with serine-protein phosphate. This chain is Tyrosine-protein phosphatase YVH1 (YVH1), found in Saccharomyces cerevisiae (strain ATCC 204508 / S288c) (Baker's yeast).